A 405-amino-acid polypeptide reads, in one-letter code: Serpin B12 (405 aa).

Residues 64-83 form a disordered region; it reads SQNESKEPDPCLKSNKQKAG.

Belongs to the serpin family. Ov-serpin subfamily. As to quaternary structure, interacts with SLFN12; as part of a pathway regulating cell differentiation. May interact with USP14. Expressed in many tissues, including brain, bone marrow, lymph node, heart, lung, liver, pancreas, testis, ovary, and intestine.

Its subcellular location is the cytoplasm. Inhibits trypsin and plasmin, but not thrombin, coagulation factor Xa, or urokinase-type plasminogen activator. May play a role in cell differentiation. The sequence is that of Serpin B12 (SERPINB12) from Homo sapiens (Human).